The sequence spans 1075 residues: Carbamoyl phosphate synthase large chain (1075 aa).

Positions 1 to 403 (MPKRTDINTI…SLQKALRGLE (403 aa)) are carboxyphosphate synthetic domain. Residues arginine 129, arginine 169, glycine 175, glycine 176, glutamine 208, valine 210, glutamate 215, glycine 241, valine 242, histidine 243, glutamine 285, and glutamate 299 each contribute to the ATP site. The ATP-grasp 1 domain occupies 133-328 (KDAMTKIGLN…IAKVAAKLAV (196 aa)). Mg(2+)-binding residues include glutamine 285, glutamate 299, and asparagine 301. Mn(2+)-binding residues include glutamine 285, glutamate 299, and asparagine 301. The oligomerization domain stretch occupies residues 404 to 548 (IGICGFNLRS…YSTYEDECEA (145 aa)). Residues 549 to 930 (KPTTRQKVMI…AYYKAQLGAG (382 aa)) form a carbamoyl phosphate synthetic domain region. Positions 673-864 (QKILTDLGLK…LAKIAALVMA (192 aa)) constitute an ATP-grasp 2 domain. Residues arginine 709, histidine 748, leucine 750, glutamate 755, glycine 780, isoleucine 781, histidine 782, serine 783, glutamine 823, and glutamate 835 each coordinate ATP. Glutamine 823, glutamate 835, and asparagine 837 together coordinate Mg(2+). 3 residues coordinate Mn(2+): glutamine 823, glutamate 835, and asparagine 837. In terms of domain architecture, MGS-like spans 931–1070 (ERIPSTGKVF…QQLHLSSALA (140 aa)). Positions 931 to 1075 (ERIPSTGKVF…SSALANQITR (145 aa)) are allosteric domain.

Belongs to the CarB family. As to quaternary structure, composed of two chains; the small (or glutamine) chain promotes the hydrolysis of glutamine to ammonia, which is used by the large (or ammonia) chain to synthesize carbamoyl phosphate. Tetramer of heterodimers (alpha,beta)4. Requires Mg(2+) as cofactor. Mn(2+) is required as a cofactor.

It carries out the reaction hydrogencarbonate + L-glutamine + 2 ATP + H2O = carbamoyl phosphate + L-glutamate + 2 ADP + phosphate + 2 H(+). The enzyme catalyses hydrogencarbonate + NH4(+) + 2 ATP = carbamoyl phosphate + 2 ADP + phosphate + 2 H(+). It functions in the pathway amino-acid biosynthesis; L-arginine biosynthesis; carbamoyl phosphate from bicarbonate: step 1/1. It participates in pyrimidine metabolism; UMP biosynthesis via de novo pathway; (S)-dihydroorotate from bicarbonate: step 1/3. Its function is as follows. Large subunit of the glutamine-dependent carbamoyl phosphate synthetase (CPSase). CPSase catalyzes the formation of carbamoyl phosphate from the ammonia moiety of glutamine, carbonate, and phosphate donated by ATP, constituting the first step of 2 biosynthetic pathways, one leading to arginine and/or urea and the other to pyrimidine nucleotides. The large subunit (synthetase) binds the substrates ammonia (free or transferred from glutamine from the small subunit), hydrogencarbonate and ATP and carries out an ATP-coupled ligase reaction, activating hydrogencarbonate by forming carboxy phosphate which reacts with ammonia to form carbamoyl phosphate. The sequence is that of Carbamoyl phosphate synthase large chain from Haemophilus ducreyi (strain 35000HP / ATCC 700724).